Consider the following 765-residue polypeptide: Protein transport protein Sec23A (765 aa).

At Thr-2 the chain carries N-acetylthreonine. Positions 61, 66, 85, and 88 each coordinate Zn(2+). At Thr-308 the chain carries Phosphothreonine. Residues Pro-632–Leu-718 form a Gelsolin-like repeat.

It belongs to the SEC23/SEC24 family. SEC23 subfamily. In terms of assembly, COPII is composed of at least five proteins: the Sec23/24 complex, the Sec13/31 complex and Sar1. Interacts with SEC23IP. Interacts with HTR4. Interacts with SEC16A. Interacts with SLC6A4. Interacts (as part of the Sec23/24 complex) with SEC22B; recruits SEC22B into COPII-coated vesicles and allows the transport of this cargo from the endoplasmic reticulum to the Golgi. Interacts (via Gelsolin-like repeat) with MIA2 and MIA3; specifically involved in the transport of large cargos like the collagen COL7A1. Interacts with DDHD1. Interacts with TMEM39A. Interacts with SACM1L; this interaction is reduced in the absence of TMEM39A. Interacts with kinase FAM20C; transport of FAM20C from the endoplasmic reticulum to the Golgi is likely to be mediated by COPII vesicles.

It is found in the cytoplasmic vesicle. The protein resides in the COPII-coated vesicle membrane. Its subcellular location is the endoplasmic reticulum membrane. It localises to the cytoplasm. The protein localises to the cytosol. Functionally, component of the coat protein complex II (COPII) which promotes the formation of transport vesicles from the endoplasmic reticulum (ER). The coat has two main functions, the physical deformation of the endoplasmic reticulum membrane into vesicles and the selection of cargo molecules for their transport to the Golgi complex. Required for the translocation of insulin-induced glucose transporter SLC2A4/GLUT4 to the cell membrane. The chain is Protein transport protein Sec23A from Pongo abelii (Sumatran orangutan).